A 287-amino-acid chain; its full sequence is 3-hydroxyanthranilate 3,4-dioxygenase (287 aa).

Residues 1 to 163 (MTNQSLHVNI…SKENETGKPD (163 aa)) are domain A (catalytic). Position 46 (Arg46) interacts with O2. Fe cation is bound by residues His50, Glu56, and His94. Substrate is bound at residue Glu56. Substrate-binding residues include Arg98 and Glu108. The linker stretch occupies residues 164-180 (PANPIKPAPYPLNTMNV). Residues 181-287 (MTPFSFREWV…AQDPDRKRPY (107 aa)) form a domain B region.

The protein belongs to the 3-HAO family. As to quaternary structure, monomer. Fe(2+) serves as cofactor.

It localises to the cytoplasm. Its subcellular location is the cytosol. It catalyses the reaction 3-hydroxyanthranilate + O2 = (2Z,4Z)-2-amino-3-carboxymuconate 6-semialdehyde. The protein operates within cofactor biosynthesis; NAD(+) biosynthesis; quinolinate from L-kynurenine: step 3/3. Functionally, catalyzes the oxidative ring opening of 3-hydroxyanthranilate to 2-amino-3-carboxymuconate semialdehyde, which spontaneously cyclizes to quinolinate. The polypeptide is 3-hydroxyanthranilate 3,4-dioxygenase (haao) (Danio rerio (Zebrafish)).